The primary structure comprises 209 residues: MSEMQMPEMRYILPSFVEHSSYGAKESNPYNKLFEERIIFLGTQVDDASANDIMAQLLVLEGLDPDRDITMYINSPGGSFTSLMAIYDTMQYVRPDVQTVCLGQAASAAAVLLAAGTPGKRAALPNARVLIHQPATGGVQGQVSDLEIQAKEIERMRKLMEETLARHTGKSAEQVRIDTDRDKILTAEEAKEYGIVDQVFDYRKLSAQN.

The active-site Nucleophile is the S107. H132 is an active-site residue.

This sequence belongs to the peptidase S14 family. In terms of assembly, fourteen ClpP subunits assemble into 2 heptameric rings which stack back to back to give a disk-like structure with a central cavity, resembling the structure of eukaryotic proteasomes.

It localises to the cytoplasm. It carries out the reaction Hydrolysis of proteins to small peptides in the presence of ATP and magnesium. alpha-casein is the usual test substrate. In the absence of ATP, only oligopeptides shorter than five residues are hydrolyzed (such as succinyl-Leu-Tyr-|-NHMec, and Leu-Tyr-Leu-|-Tyr-Trp, in which cleavage of the -Tyr-|-Leu- and -Tyr-|-Trp bonds also occurs).. Cleaves peptides in various proteins in a process that requires ATP hydrolysis. Has a chymotrypsin-like activity. Plays a major role in the degradation of misfolded proteins. The protein is ATP-dependent Clp protease proteolytic subunit 2 of Corynebacterium jeikeium (strain K411).